The sequence spans 122 residues: Large ribosomal subunit protein uL14 (122 aa).

It belongs to the universal ribosomal protein uL14 family. Part of the 50S ribosomal subunit. Forms a cluster with proteins L3 and L19. In the 70S ribosome, L14 and L19 interact and together make contacts with the 16S rRNA in bridges B5 and B8.

Its function is as follows. Binds to 23S rRNA. Forms part of two intersubunit bridges in the 70S ribosome. This is Large ribosomal subunit protein uL14 from Trichlorobacter lovleyi (strain ATCC BAA-1151 / DSM 17278 / SZ) (Geobacter lovleyi).